The following is a 232-amino-acid chain: UPF0758 protein BH3032 (232 aa).

In terms of domain architecture, MPN spans 107–229; that stretch reads VIRTPEDVSR…FVSLKEKGHL (123 aa). Zn(2+) contacts are provided by H178, H180, and D191. Residues 178 to 191 carry the JAMM motif motif; it reads HNHPSGDPTPSRED.

The protein belongs to the UPF0758 family.

The chain is UPF0758 protein BH3032 from Halalkalibacterium halodurans (strain ATCC BAA-125 / DSM 18197 / FERM 7344 / JCM 9153 / C-125) (Bacillus halodurans).